We begin with the raw amino-acid sequence, 827 residues long: Villin-1 (827 aa).

Residues 1–126 (MTKLSAQVKG…IRKGGVASGM (126 aa)) are necessary for homodimerization. Residues 1 to 734 (MTKLSAQVKG…YEDLKAELGN (734 aa)) are core. A Gelsolin-like 1 repeat occupies 27–76 (MQMVPVPSNSFGSFFDGDCYVIQAIHKTGSNLSYDIHYWIGQASSQDEQG). LPA/PIP2-binding site stretches follow at residues 112–119 (KKGIVIRK) and 138–146 (RLLHVKGKR). Gelsolin-like repeat units lie at residues 148–188 (VVAG…MERL) and 265–309 (VVVR…QEKK). S366 is modified (phosphoserine). 3 Gelsolin-like repeats span residues 407–457 (NLEL…DEIT), 528–568 (TKAF…DERE), and 631–672 (FLAT…DEKK). S735 bears the Phosphoserine mark. A headpiece region spans residues 735–827 (SGDWSQITAE…QNLKKEKGLF (93 aa)). One can recognise an HP domain in the interval 761–827 (SGPLPIFPLE…QNLKKEKGLF (67 aa)). An LPA/PIP2-binding site 3 region spans residues 816 to 824 (KQQNLKKEK).

It belongs to the villin/gelsolin family. Monomer. Homodimer; homodimerization is necessary for actin-bundling. Associates with F-actin; phosphorylation at tyrosine residues decreases the association with F-actin. Interacts (phosphorylated at C-terminus tyrosine phosphorylation sites) with PLCG1 (via the SH2 domains). Interacts (phosphorylated form) with PLCG1; the interaction is enhanced by hepatocyte growth factor (HGF). In terms of processing, phosphorylated on tyrosine residues by SRC. The unphosphorylated form increases the initial rate of actin-nucleating activity, whereas the tyrosine-phosphorylated form inhibits actin-nucleating activity, enhances actin-bundling activity and enhances actin-severing activity by reducing high Ca(2+) requirements. The tyrosine-phosphorylated form does not regulate actin-capping activity. Tyrosine phosphorylation is essential for cell migration: tyrosine phosphorylation sites in the N-terminus half regulate actin reorganization and cell morphology, whereas tyrosine phosphorylation sites in the C-terminus half regulate cell migration via interaction with PLCG1. Tyrosine phosphorylation is induced by epidermal growth factor (EGF) and stimulates cell migration.

It localises to the cytoplasm. The protein localises to the cytoskeleton. It is found in the cell projection. Its subcellular location is the lamellipodium. The protein resides in the ruffle. It localises to the microvillus. The protein localises to the filopodium tip. It is found in the filopodium. Epithelial cell-specific Ca(2+)-regulated actin-modifying protein that modulates the reorganization of microvillar actin filaments. Plays a role in the actin nucleation, actin filament bundle assembly, actin filament capping and severing. Binds phosphatidylinositol 4,5-bisphosphate (PIP2) and lysophosphatidic acid (LPA); binds LPA with higher affinity than PIP2. Binding to LPA increases its phosphorylation by SRC and inhibits all actin-modifying activities. Binding to PIP2 inhibits actin-capping and -severing activities but enhances actin-bundling activity. Regulates the intestinal epithelial cell morphology, cell invasion, cell migration and apoptosis. Protects against apoptosis induced by dextran sodium sulfate (DSS) in the gastrointestinal epithelium. Appears to regulate cell death by maintaining mitochondrial integrity. Enhances hepatocyte growth factor (HGF)-induced epithelial cell motility, chemotaxis and wound repair. The protein is Villin-1 (VIL1) of Bos taurus (Bovine).